The chain runs to 259 residues: Electron transfer flavoprotein subunit beta (259 aa).

It belongs to the ETF beta-subunit/FixA family. Heterodimer of an alpha and a beta subunit. FAD is required as a cofactor. AMP serves as cofactor.

The electron transfer flavoprotein serves as a specific electron acceptor for other dehydrogenases. It transfers the electrons to the main respiratory chain via ETF-ubiquinone oxidoreductase (ETF dehydrogenase). This Clostridium acetobutylicum (strain ATCC 824 / DSM 792 / JCM 1419 / IAM 19013 / LMG 5710 / NBRC 13948 / NRRL B-527 / VKM B-1787 / 2291 / W) protein is Electron transfer flavoprotein subunit beta (etfB).